The chain runs to 588 residues: Zinc finger protein 599 (588 aa).

In terms of domain architecture, KRAB spans 9 to 80; sequence VSFEDVVVTF…KRGLSQSTCA (72 aa). C2H2-type zinc fingers lie at residues 199–221, 227–249, 255–277, 283–305, 311–333, 339–361, 367–389, 395–417, 423–445, 451–473, 479–501, 507–529, 535–557, and 563–585; these read YTCT…QQIH, YECN…MRLH, YKCI…QRIH, YECK…NMTH, FLCK…MRIH, YECG…NVTH, YECG…KRTH, FECK…MRIH, YECS…NRTH, LECK…MRIH, YVCR…NRIH, FECK…MRTH, and FECN…RKIH.

Belongs to the krueppel C2H2-type zinc-finger protein family.

The protein localises to the nucleus. In terms of biological role, may be involved in transcriptional regulation. The protein is Zinc finger protein 599 (ZNF599) of Homo sapiens (Human).